A 458-amino-acid polypeptide reads, in one-letter code: Glycine--tRNA ligase (458 aa).

2 residues coordinate substrate: arginine 97 and glutamate 171. Residues 203 to 205, 213 to 218, 287 to 288, and 331 to 334 each bind ATP; these read RNE, FRTREF, EL, and GADR. 218-222 contacts substrate; it reads FEQME. 327–331 contributes to the substrate binding site; sequence EPSLG.

The protein belongs to the class-II aminoacyl-tRNA synthetase family. Homodimer.

The protein localises to the cytoplasm. It catalyses the reaction tRNA(Gly) + glycine + ATP = glycyl-tRNA(Gly) + AMP + diphosphate. In terms of biological role, catalyzes the attachment of glycine to tRNA(Gly). This chain is Glycine--tRNA ligase, found in Bacillus anthracis.